The following is a 493-amino-acid chain: MSFKDLRSFIDHLEANGELKRISYPVDPYLEMTEIADRVLRSGGPALLFENPKDNTMPVLVNLFGTPKRVAMALGKEDPLALREVGELLAFLKEPEPPTGFKDALAKLPKFKQALNMPPKSVSHAPCQQVVITGDEVDLTALPIQHCWPGDVAPLVTWGLTITKGPRQKRQNLGIYRQQLLGKNKLIMRWLDHRGGALDFKDFKELHPGERYPVVVALGSDPVTILAAVTPVPDSMSEYAFAGLLRGERTEVCKAISCDLEVPATSEIILEGYIDPNEMAEEGPYGDHTGYYNETDSFPVFTVTHITKRKDAIYHSTYTGRPPDEPAMLGVALNEVFVPILRKQYPEIIDFYLPPEGCSYRMAVISIRKQYPGHAKRVMMGAWSFLRQFMYTKFIIVVDEDVNCRDWQDVIWAITTRMDPTRDTTLIDHTPIDYLDFASPVAGLGSKMGLDATNKWPGETQREWGTPIVMDPNVKQKVDEIWQDLGIDSHPTL.

Asn172 is a Mn(2+) binding site. Prenylated FMN-binding positions include Ile175–Arg177, Arg189–Leu191, and Arg194–Gly195. Glu238 is a Mn(2+) binding site. Residue Asp287 is the Proton donor of the active site.

Belongs to the UbiD family. In terms of assembly, homohexamer. Requires prenylated FMN as cofactor. The cofactor is Mn(2+).

Its subcellular location is the cell membrane. The enzyme catalyses a 4-hydroxy-3-(all-trans-polyprenyl)benzoate + H(+) = a 2-(all-trans-polyprenyl)phenol + CO2. Its pathway is cofactor biosynthesis; ubiquinone biosynthesis. Its function is as follows. Catalyzes the decarboxylation of 3-octaprenyl-4-hydroxy benzoate to 2-octaprenylphenol, an intermediate step in ubiquinone biosynthesis. The polypeptide is 3-octaprenyl-4-hydroxybenzoate carboxy-lyase (Shewanella denitrificans (strain OS217 / ATCC BAA-1090 / DSM 15013)).